We begin with the raw amino-acid sequence, 341 residues long: tRNA N6-adenosine threonylcarbamoyltransferase (341 aa).

Residues H118 and H122 each coordinate Fe cation. Substrate-binding positions include L141–G145, D174, G187, and N281. Residue D309 participates in Fe cation binding.

The protein belongs to the KAE1 / TsaD family. Fe(2+) serves as cofactor.

It localises to the cytoplasm. It catalyses the reaction L-threonylcarbamoyladenylate + adenosine(37) in tRNA = N(6)-L-threonylcarbamoyladenosine(37) in tRNA + AMP + H(+). Required for the formation of a threonylcarbamoyl group on adenosine at position 37 (t(6)A37) in tRNAs that read codons beginning with adenine. Is involved in the transfer of the threonylcarbamoyl moiety of threonylcarbamoyl-AMP (TC-AMP) to the N6 group of A37, together with TsaE and TsaB. TsaD likely plays a direct catalytic role in this reaction. The chain is tRNA N6-adenosine threonylcarbamoyltransferase from Desulfitobacterium hafniense (strain Y51).